The sequence spans 586 residues: Glutamate--tRNA ligase (586 aa).

The interval 84-111 is disordered; it reads LTDIESEDTTDTYDLPSLPGVSDDEPTQ. Acidic residues predominate over residues 85–94; the sequence is TDIESEDTTD. Positions 119–129 match the 'HIGH' region motif; the sequence is PNPNGPWHIGH.

It belongs to the class-I aminoacyl-tRNA synthetase family. Glutamate--tRNA ligase type 2 subfamily.

It is found in the cytoplasm. The enzyme catalyses tRNA(Glu) + L-glutamate + ATP = L-glutamyl-tRNA(Glu) + AMP + diphosphate. Its function is as follows. Catalyzes the attachment of glutamate to tRNA(Glu) in a two-step reaction: glutamate is first activated by ATP to form Glu-AMP and then transferred to the acceptor end of tRNA(Glu). The sequence is that of Glutamate--tRNA ligase from Haloquadratum walsbyi (strain DSM 16790 / HBSQ001).